The sequence spans 397 residues: Pectate lyase 4 (397 aa).

A signal peptide spans 1-25 (MGIKHCCYILYFTLALVTLVQAGRL). An N-linked (GlcNAc...) asparagine glycan is attached at Asn-36. Cys-54 and Cys-71 are joined by a disulfide. PbH1 repeat units lie at residues 159–202 (VKNV…HVTG), 203–224 (SSDI…VDVN), and 227–248 (STGV…LLGA). The Ca(2+) site is built by Asp-194, Asp-218, and Asp-222. Arg-274 is a catalytic residue.

It belongs to the polysaccharide lyase 1 family. Amb a subfamily. Monomer. The cofactor is Ca(2+). Post-translationally, the N-terminus is blocked. Pollen and flowers.

It catalyses the reaction Eliminative cleavage of (1-&gt;4)-alpha-D-galacturonan to give oligosaccharides with 4-deoxy-alpha-D-galact-4-enuronosyl groups at their non-reducing ends.. Its pathway is glycan metabolism; pectin degradation; 2-dehydro-3-deoxy-D-gluconate from pectin: step 2/5. Its function is as follows. Has pectate lyase activity. The chain is Pectate lyase 4 from Ambrosia artemisiifolia (Common ragweed).